The chain runs to 118 residues: UPF0344 protein YisL (118 aa).

Helical transmembrane passes span 4–24 (LHITTWVVALILLFVSYSLYS), 33–53 (ITHMILRLFYILIILTGAELF), 62–82 (EYAGKMILGIITIGLMEMLLI), and 93–113 (LWVGFVIVLLLTVLLGLHLPI).

The protein belongs to the UPF0344 family.

It is found in the cell membrane. This is UPF0344 protein YisL (yisL) from Bacillus subtilis (strain 168).